Here is a 201-residue protein sequence, read N- to C-terminus: Dimethylsulfoniopropionate lyase DddQ (201 aa).

Positions 130, 134, 136, and 169 each coordinate a divalent metal cation.

It belongs to the non-heme iron-dependent dioxygenase family. Homodimer. A divalent metal cation serves as cofactor.

It carries out the reaction S,S-dimethyl-beta-propiothetin = acrylate + dimethyl sulfide + H(+). Functionally, may act as a dimethylsulfoniopropionate (DMSP) in vitro, releasing dimethyl sulfide (DMS). DMS is the principal form by which sulfur is transported from oceans to the atmosphere. The real activity of the protein is however subject to debate and it is unclear whether it constitutes a real dimethylsulfoniopropionate lyase in vivo. This is Dimethylsulfoniopropionate lyase DddQ from Ruegeria pomeroyi (strain ATCC 700808 / DSM 15171 / DSS-3) (Silicibacter pomeroyi).